Reading from the N-terminus, the 205-residue chain is Imidazole glycerol phosphate synthase subunit HisH (205 aa).

The Glutamine amidotransferase type-1 domain occupies 1-205; the sequence is MIALVDYGGG…FFKMALGDKK (205 aa). Cys79 acts as the Nucleophile in catalysis. Catalysis depends on residues His181 and Glu183.

As to quaternary structure, heterodimer of HisH and HisF.

Its subcellular location is the cytoplasm. The catalysed reaction is 5-[(5-phospho-1-deoxy-D-ribulos-1-ylimino)methylamino]-1-(5-phospho-beta-D-ribosyl)imidazole-4-carboxamide + L-glutamine = D-erythro-1-(imidazol-4-yl)glycerol 3-phosphate + 5-amino-1-(5-phospho-beta-D-ribosyl)imidazole-4-carboxamide + L-glutamate + H(+). It catalyses the reaction L-glutamine + H2O = L-glutamate + NH4(+). It functions in the pathway amino-acid biosynthesis; L-histidine biosynthesis; L-histidine from 5-phospho-alpha-D-ribose 1-diphosphate: step 5/9. IGPS catalyzes the conversion of PRFAR and glutamine to IGP, AICAR and glutamate. The HisH subunit catalyzes the hydrolysis of glutamine to glutamate and ammonia as part of the synthesis of IGP and AICAR. The resulting ammonia molecule is channeled to the active site of HisF. The chain is Imidazole glycerol phosphate synthase subunit HisH from Dehalococcoides mccartyi (strain CBDB1).